A 336-amino-acid polypeptide reads, in one-letter code: Nucleoid-associated protein Spro_3255 (336 aa).

It belongs to the YejK family.

It localises to the cytoplasm. Its subcellular location is the nucleoid. In Serratia proteamaculans (strain 568), this protein is Nucleoid-associated protein Spro_3255.